The sequence spans 305 residues: Olfactory receptor 9G1 (305 aa).

Over 1–24 (MQRSNHTVTEFILLGFTTDPGMQL) the chain is Extracellular. Residue Asn5 is glycosylated (N-linked (GlcNAc...) asparagine). The chain crosses the membrane as a helical span at residues 25–45 (GLFVVFLGVYSLTVVGNSTLI). At 46–53 (VLICNDSC) the chain is on the cytoplasmic side. A helical transmembrane segment spans residues 54 to 74 (LHTPMYFFTGNLSFLDLWYSS). Residues 75–98 (VYTPKILVTCISEDKSISFAGCLC) are Extracellular-facing. The cysteines at positions 96 and 188 are disulfide-linked. A helical transmembrane segment spans residues 99–119 (QFFFSAGLAYSECYLLAAVAY). Topologically, residues 120–138 (DRYVAISKPLLYAQAMSIK) are cytoplasmic. The helical transmembrane segment at 139 to 159 (LCALLVAVSYCGGFINSSIIT) threads the bilayer. Residues 160–196 (KKTFSFNFCRENIIDDFFCDLLPLVELACGEKGGYKI) are Extracellular-facing. The chain crosses the membrane as a helical span at residues 197-216 (MMYFLLASNVICPAVLILAS). Residues 217–236 (YLFIITSVLRISSSKGYLKA) lie on the Cytoplasmic side of the membrane. Residues 237–257 (FSTCSSHLTSVTLYYGSILYI) form a helical membrane-spanning segment. At 258 to 270 (YALPRSSYSFDMD) the chain is on the extracellular side. The chain crosses the membrane as a helical span at residues 271-291 (KIVSTFYTVVFPMLNLMIYSL). Residues 292-305 (RNKDVKEALKKLLP) are Cytoplasmic-facing.

This sequence belongs to the G-protein coupled receptor 1 family.

It localises to the cell membrane. Its function is as follows. Odorant receptor. This Homo sapiens (Human) protein is Olfactory receptor 9G1 (OR9G1).